The primary structure comprises 278 residues: Large ribosomal subunit protein uL2 (278 aa).

Residues 226–278 (NPIDHPHGGGEGRTSGGRHPVTPWGKPTKGKKTRSNKSTDKFILISRHKRKKK) are disordered.

It belongs to the universal ribosomal protein uL2 family. Part of the 50S ribosomal subunit. Forms a bridge to the 30S subunit in the 70S ribosome.

Functionally, one of the primary rRNA binding proteins. Required for association of the 30S and 50S subunits to form the 70S ribosome, for tRNA binding and peptide bond formation. It has been suggested to have peptidyltransferase activity; this is somewhat controversial. Makes several contacts with the 16S rRNA in the 70S ribosome. The chain is Large ribosomal subunit protein uL2 from Rhodopseudomonas palustris (strain HaA2).